Here is a 525-residue protein sequence, read N- to C-terminus: MSVLRFLVTRQALAALTRPRTLNIIQNPAQIAYASTLCNQNSNHNAKDLTKSSANLSLMQTRGHKRFGHQEEKTPSVTKYFHMFILSLFLISVMDWGKVKRMLTPKVDADAGQRPSSAADVNGEDKSSESESEDSEDEEAGSDLHLHEGKKIREKVGFRERKIIEYENRIRQFSTPDKVFRYFATIQVPVADDRHEVYMTPTDFLTSMTPGMKQPDGLGLDQYRRYDPKSVGEQLNLHLEKNSIFYKLGSYGLITFSDYIFLLTVLSISRRHFEIAFRMFDLNGDGDVDCEEFEMVATLVRQQTSMGTRHRDHANTGNTFKGVNSALITYFFGPNMDEKLTIEKFLDFQEQLQREILSLEFERKEPNDEGNITEADFAELLLAYAGYPLKKKQKKLKRVKRRFRDHGKGISKQDYLDFFHFLNNINDVDTALTFYHIAGASIDQQTLQHVAKTVAMVNLSDHVVDVVFTIFDENNDNQLSNKEFISVMKNRVQRGLEKPKDTGFLKMMRSVFKCAKETKPVLLDI.

The disordered stretch occupies residues 109–146; it reads ADAGQRPSSAADVNGEDKSSESESEDSEDEEAGSDLHL. Residues 130–141 show a composition bias toward acidic residues; the sequence is SESEDSEDEEAG. EF-hand domains follow at residues 268–303 and 459–494; these read ISRR…VRQQ and LSDH…RVQR. The Ca(2+) site is built by Asp-281, Asn-283, Asp-285, Asp-287, Glu-292, Asp-472, Asn-474, Asp-476, Gln-478, and Glu-483.

Belongs to the MICU1 family. MICU1 subfamily.

It localises to the mitochondrion intermembrane space. It is found in the mitochondrion inner membrane. In terms of biological role, calcium sensor of the mitochondrial calcium uniporter (MCU) channel, which senses calcium level via its EF-hand domains. At low calcium levels, MICU1 occludes the pore of the MCU channel, preventing mitochondrial calcium uptake. At higher calcium levels, calcium-binding to MICU1 induces a conformational change that weakens MCU-MICU1 interactions and moves MICU1 away from the pore, allowing calcium permeation through the MCU channel. Also required to protect against manganese toxicity by preventing manganese uptake by MCU. During development, required in alpha/beta or gamma mushroom body neurons to support olfactory intermediate-term memory in the adult. This chain is Calcium uptake protein 1 homolog, mitochondrial, found in Drosophila melanogaster (Fruit fly).